The primary structure comprises 184 residues: Large ribosomal subunit protein uL5 (184 aa).

The protein belongs to the universal ribosomal protein uL5 family. As to quaternary structure, part of the 50S ribosomal subunit; part of the 5S rRNA/L5/L18/L25 subcomplex. Contacts the 5S rRNA and the P site tRNA. Forms a bridge to the 30S subunit in the 70S ribosome.

This is one of the proteins that bind and probably mediate the attachment of the 5S RNA into the large ribosomal subunit, where it forms part of the central protuberance. In the 70S ribosome it contacts protein S13 of the 30S subunit (bridge B1b), connecting the 2 subunits; this bridge is implicated in subunit movement. Contacts the P site tRNA; the 5S rRNA and some of its associated proteins might help stabilize positioning of ribosome-bound tRNAs. This Corynebacterium kroppenstedtii (strain DSM 44385 / JCM 11950 / CIP 105744 / CCUG 35717) protein is Large ribosomal subunit protein uL5.